The sequence spans 79 residues: ATP synthase subunit c (79 aa).

2 helical membrane passes run 11–31 (MAAAIMMGLAAIGAAIGIGIL) and 53–73 (FFIVMGLVDAIPMIAVGLGLY).

This sequence belongs to the ATPase C chain family. In terms of assembly, F-type ATPases have 2 components, F(1) - the catalytic core - and F(0) - the membrane proton channel. F(1) has five subunits: alpha(3), beta(3), gamma(1), delta(1), epsilon(1). F(0) has three main subunits: a(1), b(2) and c(10-14). The alpha and beta chains form an alternating ring which encloses part of the gamma chain. F(1) is attached to F(0) by a central stalk formed by the gamma and epsilon chains, while a peripheral stalk is formed by the delta and b chains.

The protein localises to the cell inner membrane. In terms of biological role, f(1)F(0) ATP synthase produces ATP from ADP in the presence of a proton or sodium gradient. F-type ATPases consist of two structural domains, F(1) containing the extramembraneous catalytic core and F(0) containing the membrane proton channel, linked together by a central stalk and a peripheral stalk. During catalysis, ATP synthesis in the catalytic domain of F(1) is coupled via a rotary mechanism of the central stalk subunits to proton translocation. Functionally, key component of the F(0) channel; it plays a direct role in translocation across the membrane. A homomeric c-ring of between 10-14 subunits forms the central stalk rotor element with the F(1) delta and epsilon subunits. The sequence is that of ATP synthase subunit c from Proteus mirabilis (strain HI4320).